A 1300-amino-acid chain; its full sequence is Zinc finger protein 536 (1300 aa).

Disordered stretches follow at residues 1 to 26 and 47 to 77; these read MEEA…GPVL and FPEL…GQPM. The segment covering 48-69 has biased composition (basic and acidic residues); sequence PELHPRPNPEEKPPASLEEKAH. 6 consecutive C2H2-type zinc fingers follow at residues 130–152, 158–180, 274–297, 300–323, 345–367, and 373–395; these read YPCP…MRTH, FKCP…LRTH, FRCT…RILH, YKCT…EKAH, FRCE…MRKH, and HCCQ…MKVH. 2 disordered regions span residues 584–604 and 650–739; these read HSTK…LESS and SRVH…QQPA. The segment covering 594–604 has biased composition (basic and acidic residues); it reads LPSKLDPLESS. The segment at 631-653 adopts a C2H2-type 7 zinc-finger fold; it reads TECPDCGRVFRTYHQVVVHSRVH. Residues 657 to 674 are compositionally biased toward basic and acidic residues; the sequence is RKGEEDGLHVGLDERRGS. Over residues 675-696 the composition is skewed to polar residues; the sequence is GSDQESQSVSRSTTPGSSNVTE. 2 consecutive C2H2-type zinc fingers follow at residues 751–773 and 779–801; these read KDCP…LRIH and YKCP…LERH. The segment at 802–826 is disordered; sequence HRERQNGAGPLSGQPPNQDHKDEMS. S826 and S827 each carry phosphoserine. Positions 856 to 880 are enriched in polar residues; that stretch reads SQQWTSGVLSSGDHSGQATGMSSEV. Disordered regions lie at residues 856–893, 937–985, and 1124–1260; these read SQQW…LPSK, KDKA…PDAA, and SGAS…SLDK. 2 stretches are compositionally biased toward basic and acidic residues: residues 950 to 972 and 1133 to 1143; these read HGVD…EKSQ and KEPDGKAHSEE. 2 stretches are compositionally biased toward acidic residues: residues 1160-1170 and 1178-1187; these read DLSDIASSEDM and NDEEDVETEP. Positions 1194 to 1209 are enriched in low complexity; it reads LSALSKDSSSDGGDSL.

This sequence belongs to the krueppel C2H2-type zinc-finger protein family.

The protein resides in the nucleus. Its function is as follows. Transcriptional repressor that negatively regulates neuron differentiation by repressing retinoic acid-induced gene transcription. Binds and interrupts RARA from binding to retinoic acid response elements (RARE) composed of tandem 5'-AGGTCA-3' sites known as DR1-DR5. Recognizes and binds 2 copies of the core DNA sequence 5'-CCCCCA-3'. The chain is Zinc finger protein 536 (ZNF536) from Homo sapiens (Human).